Consider the following 565-residue polypeptide: Arginine--tRNA ligase (565 aa).

The 'HIGH' region motif lies at 120–130 (PNIAKPFHVGH).

The protein belongs to the class-I aminoacyl-tRNA synthetase family. In terms of assembly, monomer.

The protein resides in the cytoplasm. The enzyme catalyses tRNA(Arg) + L-arginine + ATP = L-arginyl-tRNA(Arg) + AMP + diphosphate. This Clostridium perfringens (strain 13 / Type A) protein is Arginine--tRNA ligase.